We begin with the raw amino-acid sequence, 433 residues long: D-amino acid dehydrogenase (433 aa).

3-17 (VVILGSGVVGVASAW) is an FAD binding site.

It belongs to the DadA oxidoreductase family. FAD serves as cofactor.

It catalyses the reaction a D-alpha-amino acid + A + H2O = a 2-oxocarboxylate + AH2 + NH4(+). The protein operates within amino-acid degradation; D-alanine degradation; NH(3) and pyruvate from D-alanine: step 1/1. Oxidative deamination of D-amino acids. This is D-amino acid dehydrogenase from Erwinia tasmaniensis (strain DSM 17950 / CFBP 7177 / CIP 109463 / NCPPB 4357 / Et1/99).